The chain runs to 451 residues: Bifunctional protein GlmU (451 aa).

Positions 1–231 (MDSPLAIIVL…ADEVAGINSR (231 aa)) are pyrophosphorylase. UDP-N-acetyl-alpha-D-glucosamine is bound by residues 10–13 (LAAG), Lys24, Gln74, 79–80 (GT), 102–104 (YGD), Gly142, Glu156, Asn171, and Asn229. Asp104 is a binding site for Mg(2+). Asn229 provides a ligand contact to Mg(2+). A linker region spans residues 232-252 (GELAEAEGRWQQRRRAAAMAD). An N-acetyltransferase region spans residues 253-451 (GASLIAPETV…MKKKKAEKKS (199 aa)). UDP-N-acetyl-alpha-D-glucosamine contacts are provided by Arg318 and Lys336. The active-site Proton acceptor is His348. Residues Tyr351 and Asn362 each contribute to the UDP-N-acetyl-alpha-D-glucosamine site. Residues Ala365, 371–372 (NY), Ser390, Ala408, and Arg425 each bind acetyl-CoA.

The protein in the N-terminal section; belongs to the N-acetylglucosamine-1-phosphate uridyltransferase family. In the C-terminal section; belongs to the transferase hexapeptide repeat family. In terms of assembly, homotrimer. Mg(2+) is required as a cofactor.

It is found in the cytoplasm. It catalyses the reaction alpha-D-glucosamine 1-phosphate + acetyl-CoA = N-acetyl-alpha-D-glucosamine 1-phosphate + CoA + H(+). The catalysed reaction is N-acetyl-alpha-D-glucosamine 1-phosphate + UTP + H(+) = UDP-N-acetyl-alpha-D-glucosamine + diphosphate. It functions in the pathway nucleotide-sugar biosynthesis; UDP-N-acetyl-alpha-D-glucosamine biosynthesis; N-acetyl-alpha-D-glucosamine 1-phosphate from alpha-D-glucosamine 6-phosphate (route II): step 2/2. The protein operates within nucleotide-sugar biosynthesis; UDP-N-acetyl-alpha-D-glucosamine biosynthesis; UDP-N-acetyl-alpha-D-glucosamine from N-acetyl-alpha-D-glucosamine 1-phosphate: step 1/1. It participates in bacterial outer membrane biogenesis; LPS lipid A biosynthesis. Catalyzes the last two sequential reactions in the de novo biosynthetic pathway for UDP-N-acetylglucosamine (UDP-GlcNAc). The C-terminal domain catalyzes the transfer of acetyl group from acetyl coenzyme A to glucosamine-1-phosphate (GlcN-1-P) to produce N-acetylglucosamine-1-phosphate (GlcNAc-1-P), which is converted into UDP-GlcNAc by the transfer of uridine 5-monophosphate (from uridine 5-triphosphate), a reaction catalyzed by the N-terminal domain. This is Bifunctional protein GlmU from Novosphingobium aromaticivorans (strain ATCC 700278 / DSM 12444 / CCUG 56034 / CIP 105152 / NBRC 16084 / F199).